The chain runs to 211 residues: MTDDTKKPGPDADVAEEFVDPAQAGEEQAETAEPDPVELLKAENADLRDKFLRLAAEMDNLRRRTERDVKDAKAYSLAGFARDMLAVSDNLRRALEAIPDELKTNGEAGLNGLIEGVEMTERSMLSTLERHGVKKIDAEGQKFDPNFHQAMFEVPNTAVPNNTVLQVIQAGFTIGDRVLRPAMVGVAKGGPKAEPSASAEPGTSSLNEKDA.

A compositionally biased stretch (basic and acidic residues) spans 1 to 10 (MTDDTKKPGP). Disordered regions lie at residues 1 to 37 (MTDDTKKPGPDADVAEEFVDPAQAGEEQAETAEPDPV) and 187 to 211 (AKGGPKAEPSASAEPGTSSLNEKDA). The segment covering 27-36 (EQAETAEPDP) has biased composition (acidic residues). Positions 201–211 (PGTSSLNEKDA) are enriched in polar residues.

Belongs to the GrpE family. In terms of assembly, homodimer.

The protein localises to the cytoplasm. Its function is as follows. Participates actively in the response to hyperosmotic and heat shock by preventing the aggregation of stress-denatured proteins, in association with DnaK and GrpE. It is the nucleotide exchange factor for DnaK and may function as a thermosensor. Unfolded proteins bind initially to DnaJ; upon interaction with the DnaJ-bound protein, DnaK hydrolyzes its bound ATP, resulting in the formation of a stable complex. GrpE releases ADP from DnaK; ATP binding to DnaK triggers the release of the substrate protein, thus completing the reaction cycle. Several rounds of ATP-dependent interactions between DnaJ, DnaK and GrpE are required for fully efficient folding. The sequence is that of Protein GrpE from Agrobacterium fabrum (strain C58 / ATCC 33970) (Agrobacterium tumefaciens (strain C58)).